Reading from the N-terminus, the 258-residue chain is tRNA pseudouridine synthase A (258 aa).

Asp-55 (nucleophile) is an active-site residue. Substrate is bound at residue Tyr-113.

Belongs to the tRNA pseudouridine synthase TruA family. Homodimer.

The enzyme catalyses uridine(38/39/40) in tRNA = pseudouridine(38/39/40) in tRNA. Functionally, formation of pseudouridine at positions 38, 39 and 40 in the anticodon stem and loop of transfer RNAs. This chain is tRNA pseudouridine synthase A, found in Limosilactobacillus fermentum (strain NBRC 3956 / LMG 18251) (Lactobacillus fermentum).